We begin with the raw amino-acid sequence, 1291 residues long: DNA-directed RNA polymerase subunit beta (1291 aa).

This sequence belongs to the RNA polymerase beta chain family. In terms of assembly, the RNAP catalytic core consists of 2 alpha, 1 beta, 1 beta' and 1 omega subunit. When a sigma factor is associated with the core the holoenzyme is formed, which can initiate transcription.

The catalysed reaction is RNA(n) + a ribonucleoside 5'-triphosphate = RNA(n+1) + diphosphate. Functionally, DNA-dependent RNA polymerase catalyzes the transcription of DNA into RNA using the four ribonucleoside triphosphates as substrates. The protein is DNA-directed RNA polymerase subunit beta of Cytophaga hutchinsonii (strain ATCC 33406 / DSM 1761 / CIP 103989 / NBRC 15051 / NCIMB 9469 / D465).